A 258-amino-acid chain; its full sequence is 4-hydroxy-tetrahydrodipicolinate reductase (258 aa).

NAD(+)-binding positions include 9–14, 91–93, and 115–118; these read GASGRM, GTT, and SPNM. The Proton donor/acceptor role is filled by histidine 148. Histidine 149 serves as a coordination point for (S)-2,3,4,5-tetrahydrodipicolinate. The active-site Proton donor is lysine 152. 158–159 contributes to the (S)-2,3,4,5-tetrahydrodipicolinate binding site; it reads GT.

The protein belongs to the DapB family.

It localises to the cytoplasm. The enzyme catalyses (S)-2,3,4,5-tetrahydrodipicolinate + NAD(+) + H2O = (2S,4S)-4-hydroxy-2,3,4,5-tetrahydrodipicolinate + NADH + H(+). It carries out the reaction (S)-2,3,4,5-tetrahydrodipicolinate + NADP(+) + H2O = (2S,4S)-4-hydroxy-2,3,4,5-tetrahydrodipicolinate + NADPH + H(+). It functions in the pathway amino-acid biosynthesis; L-lysine biosynthesis via DAP pathway; (S)-tetrahydrodipicolinate from L-aspartate: step 4/4. In terms of biological role, catalyzes the conversion of 4-hydroxy-tetrahydrodipicolinate (HTPA) to tetrahydrodipicolinate. This chain is 4-hydroxy-tetrahydrodipicolinate reductase, found in Lawsonia intracellularis (strain PHE/MN1-00).